The chain runs to 804 residues: Mechanosensitive cation channel TMEM63A (804 aa).

The Extracellular segment spans residues Met-1–Pro-51. Asn-38 is a glycosylation site (N-linked (GlcNAc...) asparagine). The chain crosses the membrane as a helical span at residues Thr-52–Arg-74. At Phe-75–Glu-133 the chain is on the cytoplasmic side. Residues Asp-134–Ser-166 traverse the membrane as a helical segment. At Gly-167–Asp-190 the chain is on the extracellular side. Residues Leu-191 to Ser-216 traverse the membrane as a helical segment. At Ile-217–Val-415 the chain is on the cytoplasmic side. An intracellular linker IL2; confers mechanosensitivity region spans residues Arg-218–Gln-413. Residues Arg-416–Ser-443 traverse the membrane as a helical segment. The Extracellular portion of the chain corresponds to Thr-444–Val-461. Asn-449 is a glycosylation site (N-linked (GlcNAc...) asparagine). The helical transmembrane segment at Ile-462–Glu-489 threads the bilayer. The Cytoplasmic segment spans residues Ser-490 to Arg-494. A helical transmembrane segment spans residues Ser-495–Leu-531. The Extracellular portion of the chain corresponds to Phe-532–Ala-553. The helical transmembrane segment at Phe-554–Ile-585 threads the bilayer. Positions Phe-554–Ile-585 are gating helix. The Cytoplasmic portion of the chain corresponds to Met-586–Glu-605. A helical membrane pass occupies residues Phe-606 to Tyr-623. Residues Ser-624 to Cys-627 are Extracellular-facing. The chain crosses the membrane as a helical span at residues Pro-628 to Tyr-650. The Cytoplasmic portion of the chain corresponds to Phe-651 to Lys-660. Residues Arg-661–Arg-688 form a helical membrane-spanning segment. Residues Leu-689–Ala-693 are Extracellular-facing. The helical transmembrane segment at Pro-694–Leu-708 threads the bilayer. At Ala-709 to Ser-804 the chain is on the cytoplasmic side. The residue at position 738 (Ser-738) is a Phosphoserine.

Belongs to the CSC1 (TC 1.A.17) family. Monomer. Post-translationally, N-Glycosylated.

The protein localises to the lysosome membrane. It is found in the early endosome membrane. It localises to the cell membrane. It carries out the reaction Ca(2+)(in) = Ca(2+)(out). Mechanosensitive cation channel with low conductance and high activation threshold. In contrast to TMEM63B, does not show phospholipid scramblase activity. Acts as a regulator of lysosomal morphology by mediating lysosomal mechanosensitivity. Important for the baby's first breath and respiration throughout life. Upon lung inflation conducts cation currents in alveolar type 1 and 2 cells triggering lamellar body exocytosis and surfactant secretion into airspace. Also acts as an osmosensitive cation channel preferentially activated by hypotonic stress. The protein is Mechanosensitive cation channel TMEM63A of Mus musculus (Mouse).